Here is a 309-residue protein sequence, read N- to C-terminus: Probable manganese-dependent inorganic pyrophosphatase (309 aa).

Positions 9, 13, 15, 75, 97, and 149 each coordinate Mn(2+).

This sequence belongs to the PPase class C family. Mn(2+) is required as a cofactor.

Its subcellular location is the cytoplasm. It catalyses the reaction diphosphate + H2O = 2 phosphate + H(+). The sequence is that of Probable manganese-dependent inorganic pyrophosphatase from Bacillus cereus (strain ZK / E33L).